A 302-amino-acid chain; its full sequence is uncharacterized protein (302 aa).

Positions 1 to 24 (MTEISELASSSQKPEKTKYNLPKP) are disordered.

This is an uncharacterized protein from Schizosaccharomyces pombe (strain 972 / ATCC 24843) (Fission yeast).